The following is a 417-amino-acid chain: Methyltransferase/ribosomally synthesized cyclic peptide lentinulin A precursor ledMA (417 aa).

Residues 1–251 (METPTLNKSG…GVSTFYIPPK (251 aa)) form a methyltransferase domain region. Residues R72, Y76, and Y98 contribute to the active site. S-adenosyl-L-methionine-binding residues include Y98, H100, V103, A130, Q172, A213, S244, and T245. Positions 252 to 378 (ERKEINVDII…WAFRCAMKEM (127 aa)) are clasp domain. Residues 379–399 (PISLLDNAKQSMEEASEQGFP) are precursor leader. An N-methylisoleucine modification is found at I401. V403 and V404 each carry N-methylvaline. The residue at position 405 (G405) is an N-methylglycine. N-methylvaline occurs at positions 406 and 407. Residue G408 is modified to N-methylglycine. N-methylvaline is present on V410. The residue at position 411 (G411) is an N-methylglycine. V413 is modified (N-methylvaline).

It in the N-terminal section; belongs to the precorrin methyltransferase family. Homodimer. In terms of processing, ledMA automethylates at Ile-401, Val-403, Val-404, Gly-405, Val-406, Val-407, Gly-408, Val-410, Gly-411 and Val-413 before being processed by the prolyloligopeptidase ledP which likely forms a peptidyl ester upon removal of the follower propeptide, which then undergoes macrocyclization with the N-terminus of the modified core peptide. Peptide backbone alpha-N-methylations change the physicochemical properties of amide bonds to provide structural constraints and other favorable characteristics including biological membrane permeability to peptides.

It functions in the pathway mycotoxin biosynthesis. Fusion protein of the methyltransferase ledM and the lentinulin A core peptide; part of the gene cluster that mediates the biosynthesis of lentinulin A, a highly methylated cyclic dodecapeptide with nematodicidal activity. Lentinulin A derives from the C-terminus of the ledMA protein, and it is the ledMA protein that methylates its own C-terminus using S-adenosyl methionine (SAM). The C-terminus is subsequently cleaved off and macrocyclized by the prolyloligopeptidase ledP to give the final product. The chain is Methyltransferase/ribosomally synthesized cyclic peptide lentinulin A precursor ledMA from Lentinula edodes (Shiitake mushroom).